The chain runs to 280 residues: uncharacterized protein (280 aa).

Residues 1-10 (MSSSIKKLKK) show a composition bias toward basic residues. Residues 1–45 (MSSSIKKLKKDTKDTDKTPSKKIYQETHNSEDSEDSEDSDNENNT) form a disordered region. Residues 11 to 31 (DTKDTDKTPSKKIYQETHNSE) are compositionally biased toward basic and acidic residues. Positions 32–41 (DSEDSEDSDN) are enriched in acidic residues.

This is an uncharacterized protein from Acanthamoeba polyphaga mimivirus (APMV).